The sequence spans 122 residues: Large ribosomal subunit protein uL14 (122 aa).

Belongs to the universal ribosomal protein uL14 family. Part of the 50S ribosomal subunit. Forms a cluster with proteins L3 and L19. In the 70S ribosome, L14 and L19 interact and together make contacts with the 16S rRNA in bridges B5 and B8.

Functionally, binds to 23S rRNA. Forms part of two intersubunit bridges in the 70S ribosome. The sequence is that of Large ribosomal subunit protein uL14 from Gluconacetobacter diazotrophicus (strain ATCC 49037 / DSM 5601 / CCUG 37298 / CIP 103539 / LMG 7603 / PAl5).